The following is a 108-amino-acid chain: ATPase inhibitor, mitochondrial (108 aa).

A mitochondrion-targeting transit peptide spans 1–25; that stretch reads MAATALAVRSRIGAWSVWAMQSRGF. The interval 25–48 is disordered; that stretch reads FSSDTPEGVRSGAGAVRDAGGAFG. The N-terminal inhibitory region stretch occupies residues 26-52; sequence SSDTPEGVRSGAGAVRDAGGAFGKKEQ. A coiled-coil region spans residues 69–108; that stretch reads ALKKHHENEISHHVKEIERLQKEIERHKQSIKKLKNDDDD. Positions 74-106 are antiparallel alpha-helical coiled coil region; the sequence is HENEISHHVKEIERLQKEIERHKQSIKKLKNDD. An N6-succinyllysine modification is found at Lys-103.

Belongs to the ATPase inhibitor family. Homodimer; represents the active form and is present at a pH value below 6.5. Homotetramer; represents the inactive form and is present at a pH value above 7.0.

The protein resides in the mitochondrion. Endogenous F(1)F(o)-ATPase inhibitor limiting ATP depletion when the mitochondrial membrane potential falls below a threshold and the F(1)F(o)-ATP synthase starts hydrolyzing ATP to pump protons out of the mitochondrial matrix. Required to avoid the consumption of cellular ATP when the F(1)F(o)-ATP synthase enzyme acts as an ATP hydrolase. Indirectly acts as a regulator of heme synthesis in erythroid tissues: regulates heme synthesis by modulating the mitochondrial pH and redox potential, allowing FECH to efficiently catalyze the incorporation of iron into protoporphyrin IX to produce heme. The polypeptide is ATPase inhibitor, mitochondrial (Sus scrofa (Pig)).